The chain runs to 294 residues: 4-hydroxy-tetrahydrodipicolinate synthase (294 aa).

Residue Thr-44 coordinates pyruvate. Catalysis depends on Tyr-132, which acts as the Proton donor/acceptor. Lys-160 serves as the catalytic Schiff-base intermediate with substrate. Val-202 contributes to the pyruvate binding site.

The protein belongs to the DapA family. As to quaternary structure, homotetramer; dimer of dimers.

The protein resides in the cytoplasm. The enzyme catalyses L-aspartate 4-semialdehyde + pyruvate = (2S,4S)-4-hydroxy-2,3,4,5-tetrahydrodipicolinate + H2O + H(+). It participates in amino-acid biosynthesis; L-lysine biosynthesis via DAP pathway; (S)-tetrahydrodipicolinate from L-aspartate: step 3/4. In terms of biological role, catalyzes the condensation of (S)-aspartate-beta-semialdehyde [(S)-ASA] and pyruvate to 4-hydroxy-tetrahydrodipicolinate (HTPA). The sequence is that of 4-hydroxy-tetrahydrodipicolinate synthase from Leptospira borgpetersenii serovar Hardjo-bovis (strain L550).